Here is a 131-residue protein sequence, read N- to C-terminus: Small ribosomal subunit protein uS8 (131 aa).

Belongs to the universal ribosomal protein uS8 family. Part of the 30S ribosomal subunit. Contacts proteins S5 and S12.

Its function is as follows. One of the primary rRNA binding proteins, it binds directly to 16S rRNA central domain where it helps coordinate assembly of the platform of the 30S subunit. The protein is Small ribosomal subunit protein uS8 of Burkholderia ambifaria (strain MC40-6).